The primary structure comprises 275 residues: Tryptophan synthase alpha chain (275 aa).

Glu-51 (proton acceptor) is an active-site residue.

It belongs to the TrpA family. As to quaternary structure, tetramer of two alpha and two beta chains.

It catalyses the reaction (1S,2R)-1-C-(indol-3-yl)glycerol 3-phosphate + L-serine = D-glyceraldehyde 3-phosphate + L-tryptophan + H2O. The protein operates within amino-acid biosynthesis; L-tryptophan biosynthesis; L-tryptophan from chorismate: step 5/5. The alpha subunit is responsible for the aldol cleavage of indoleglycerol phosphate to indole and glyceraldehyde 3-phosphate. The chain is Tryptophan synthase alpha chain from Caulobacter vibrioides (strain ATCC 19089 / CIP 103742 / CB 15) (Caulobacter crescentus).